A 626-amino-acid chain; its full sequence is E3 ubiquitin-protein ligase HRD1 (626 aa).

An N-terminal signal peptide occupies residues 1–15; the sequence is MQLLLSSVCMALTSA. Residues 16–38 lie on the Lumenal side of the membrane; that stretch reads VIGFAYYQKQQFYPAVVYITKSN. A helical membrane pass occupies residues 39 to 59; sequence ASMGVIYIQFFVIVFMFGKLL. Residues 60–96 lie on the Cytoplasmic side of the membrane; sequence SKIFLGTLRAAEFEHLLERFWYALTETCLAFTVFRDD. The helical transmembrane segment at 97–117 threads the bilayer; the sequence is FNPRFVALFTVLLFLKSFHWL. Residues 118–128 are Lumenal-facing; the sequence is AEERVDFMERS. The chain crosses the membrane as a helical span at residues 129 to 149; that stretch reads PVLGWLFHIRVGSLLTVLGIL. At 150 to 167 the chain is on the cytoplasmic side; the sequence is DYVLLIHAYNSTLVRGPT. A helical transmembrane segment spans residues 168–188; it reads VQLVFGFEYAILLTVIASTAI. Over 189–222 the chain is Lumenal; it reads KYVLHAAEMRTDTPWENKAVFLLYTELVIGLIKV. A helical membrane pass occupies residues 223–243; the sequence is VLYILFVVIMAKIYALPMFVF. The segment at 234–268 is interaction with p53/TP53; sequence KIYALPMFVFRPMFFTIRNFRKALNDVIMSRRAIR. At 244 to 626 the chain is on the cytoplasmic side; that stretch reads RPMFFTIRNF…AATNERTTAE (383 aa). The RING-type; atypical zinc-finger motif lies at 289–328; sequence CIICREDMVNHSKKLPCGHIFHTTCLRSWFQRQQTCPTCR. Positions 569 to 600 are disordered; it reads DADEDDIPSTATEAVSIPNSDADFEENSSELG. Polar residues predominate over residues 577–587; that stretch reads STATEAVSIPN.

It belongs to the HRD1 family. As to quaternary structure, homodimer. Interacts with p53. May interact with Septin2.

The protein resides in the endoplasmic reticulum membrane. It carries out the reaction S-ubiquitinyl-[E2 ubiquitin-conjugating enzyme]-L-cysteine + [acceptor protein]-L-lysine = [E2 ubiquitin-conjugating enzyme]-L-cysteine + N(6)-ubiquitinyl-[acceptor protein]-L-lysine.. Its pathway is protein modification; protein ubiquitination. Acts as an E3 ubiquitin-protein ligase which accepts ubiquitin specifically from endoplasmic reticulum-associated UBC7 E2 ligase and transfers it to substrates, promoting their degradation. Component of the endoplasmic reticulum quality control (ERQC) system also called ER-associated degradation (ERAD) involved in ubiquitin-dependent degradation of misfolded endoplasmic reticulum proteins. Also promotes the degradation of normal but naturally short-lived proteins. Protects cells from ER stress-induced apoptosis. Sequesters p53 in the cytoplasm and promotes its degradation, thereby negatively regulating its biological function in transcription, cell cycle regulation and apoptosis. The protein is E3 ubiquitin-protein ligase HRD1 (sip3) of Drosophila melanogaster (Fruit fly).